Reading from the N-terminus, the 400-residue chain is CCA-adding enzyme (400 aa).

Positions 32 and 35 each coordinate ATP. CTP contacts are provided by Gly32 and Arg35. Residues Asp45 and Asp47 each coordinate Mg(2+). Residues Arg116, Asp159, Arg162, Arg165, and Arg168 each coordinate ATP. Residues Arg116, Asp159, Arg162, Arg165, and Arg168 each coordinate CTP.

This sequence belongs to the tRNA nucleotidyltransferase/poly(A) polymerase family. Bacterial CCA-adding enzyme type 3 subfamily. As to quaternary structure, homodimer. Requires Mg(2+) as cofactor.

The catalysed reaction is a tRNA precursor + 2 CTP + ATP = a tRNA with a 3' CCA end + 3 diphosphate. It carries out the reaction a tRNA with a 3' CCA end + 2 CTP + ATP = a tRNA with a 3' CCACCA end + 3 diphosphate. Catalyzes the addition and repair of the essential 3'-terminal CCA sequence in tRNAs without using a nucleic acid template. Adds these three nucleotides in the order of C, C, and A to the tRNA nucleotide-73, using CTP and ATP as substrates and producing inorganic pyrophosphate. tRNA 3'-terminal CCA addition is required both for tRNA processing and repair. Also involved in tRNA surveillance by mediating tandem CCA addition to generate a CCACCA at the 3' terminus of unstable tRNAs. While stable tRNAs receive only 3'-terminal CCA, unstable tRNAs are marked with CCACCA and rapidly degraded. The chain is CCA-adding enzyme from Limosilactobacillus fermentum (strain NBRC 3956 / LMG 18251) (Lactobacillus fermentum).